We begin with the raw amino-acid sequence, 181 residues long: Large ribosomal subunit protein uL6m (181 aa).

Belongs to the universal ribosomal protein uL6 family.

The protein resides in the mitochondrion. The polypeptide is Large ribosomal subunit protein uL6m (RPL6) (Acanthamoeba castellanii (Amoeba)).